Here is a 380-residue protein sequence, read N- to C-terminus: Flap endonuclease 1 (380 aa).

The interval 1–104 is N-domain; the sequence is MGIKGLSQLI…GELTKRAEKR (104 aa). Position 34 (aspartate 34) interacts with Mg(2+). Positions 47 and 70 each coordinate DNA. Mg(2+) is bound by residues aspartate 86, glutamate 158, glutamate 160, aspartate 179, and aspartate 181. The tract at residues 122-253 is I-domain; sequence DIDKFNRRLV…KKAVELINKH (132 aa). Glutamate 158 is a binding site for DNA. Residues glycine 231 and aspartate 233 each contribute to the DNA site. Aspartate 233 provides a ligand contact to Mg(2+). The tract at residues 336 to 344 is interaction with PCNA; the sequence is TQGRLDSFF. A disordered region spans residues 342–380; that stretch reads SFFKVLPSTPNPKRKIEDKKTPASKKAKTTGGKPGRKPK. A compositionally biased stretch (basic residues) spans 363 to 380; sequence PASKKAKTTGGKPGRKPK.

This sequence belongs to the XPG/RAD2 endonuclease family. FEN1 subfamily. In terms of assembly, interacts with PCNA. Three molecules of FEN1 bind to one PCNA trimer with each molecule binding to one PCNA monomer. PCNA stimulates the nuclease activity without altering cleavage specificity. Mg(2+) is required as a cofactor. In terms of processing, phosphorylated. Phosphorylation upon DNA damage induces relocalization to the nuclear plasma.

It localises to the nucleus. The protein resides in the nucleolus. The protein localises to the nucleoplasm. Its subcellular location is the mitochondrion. Functionally, structure-specific nuclease with 5'-flap endonuclease and 5'-3' exonuclease activities involved in DNA replication and repair. During DNA replication, cleaves the 5'-overhanging flap structure that is generated by displacement synthesis when DNA polymerase encounters the 5'-end of a downstream Okazaki fragment. It enters the flap from the 5'-end and then tracks to cleave the flap base, leaving a nick for ligation. Also involved in the long patch base excision repair (LP-BER) pathway, by cleaving within the apurinic/apyrimidinic (AP) site-terminated flap. Acts as a genome stabilization factor that prevents flaps from equilibrating into structures that lead to duplications and deletions. Also possesses 5'-3' exonuclease activity on nicked or gapped double-stranded DNA, and exhibits RNase H activity. Also involved in replication and repair of rDNA and in repairing mitochondrial DNA. The sequence is that of Flap endonuclease 1 from Aedes aegypti (Yellowfever mosquito).